Here is a 156-residue protein sequence, read N- to C-terminus: Large ribosomal subunit protein uL15 (156 aa).

The tract at residues 1–44 is disordered; sequence MKLNELRDNPGASPKRTRVGRGPGSGKGKMGGRGIKGQKSRSGV. Residues 21–35 are compositionally biased toward gly residues; the sequence is RGPGSGKGKMGGRGI.

Belongs to the universal ribosomal protein uL15 family. As to quaternary structure, part of the 50S ribosomal subunit.

In terms of biological role, binds to the 23S rRNA. In Ruegeria sp. (strain TM1040) (Silicibacter sp.), this protein is Large ribosomal subunit protein uL15.